The following is a 419-amino-acid chain: Serine hydroxymethyltransferase (419 aa).

Residues L118 and 122–124 (GHL) contribute to the (6S)-5,6,7,8-tetrahydrofolate site. K226 is modified (N6-(pyridoxal phosphate)lysine). (6S)-5,6,7,8-tetrahydrofolate is bound at residue E242.

It belongs to the SHMT family. As to quaternary structure, homodimer. Pyridoxal 5'-phosphate is required as a cofactor.

It localises to the cytoplasm. It carries out the reaction (6R)-5,10-methylene-5,6,7,8-tetrahydrofolate + glycine + H2O = (6S)-5,6,7,8-tetrahydrofolate + L-serine. Its pathway is one-carbon metabolism; tetrahydrofolate interconversion. The protein operates within amino-acid biosynthesis; glycine biosynthesis; glycine from L-serine: step 1/1. Catalyzes the reversible interconversion of serine and glycine with tetrahydrofolate (THF) serving as the one-carbon carrier. This reaction serves as the major source of one-carbon groups required for the biosynthesis of purines, thymidylate, methionine, and other important biomolecules. Also exhibits THF-independent aldolase activity toward beta-hydroxyamino acids, producing glycine and aldehydes, via a retro-aldol mechanism. The chain is Serine hydroxymethyltransferase from Metamycoplasma arthritidis (strain 158L3-1) (Mycoplasma arthritidis).